Here is a 70-residue protein sequence, read N- to C-terminus: MNNQQKIKCPICGKQNTWRPDNQFRPFCSERCKLIDLGEWASESRKIPGSSIDPESIVTSNNKQDNVDEQ.

Residues C9, C12, C28, and C32 each contribute to the Zn(2+) site. The interval 43 to 70 (ESRKIPGSSIDPESIVTSNNKQDNVDEQ) is disordered.

The protein belongs to the DNA gyrase inhibitor YacG family. In terms of assembly, interacts with GyrB. Requires Zn(2+) as cofactor.

Its function is as follows. Inhibits all the catalytic activities of DNA gyrase by preventing its interaction with DNA. Acts by binding directly to the C-terminal domain of GyrB, which probably disrupts DNA binding by the gyrase. This chain is DNA gyrase inhibitor YacG, found in Legionella pneumophila (strain Lens).